The primary structure comprises 61 residues: Small ribosomal subunit protein uS14 (61 aa).

Zn(2+) contacts are provided by C24, C27, C40, and C43.

This sequence belongs to the universal ribosomal protein uS14 family. Zinc-binding uS14 subfamily. As to quaternary structure, part of the 30S ribosomal subunit. Contacts proteins S3 and S10. It depends on Zn(2+) as a cofactor.

In terms of biological role, binds 16S rRNA, required for the assembly of 30S particles and may also be responsible for determining the conformation of the 16S rRNA at the A site. This Symbiobacterium thermophilum (strain DSM 24528 / JCM 14929 / IAM 14863 / T) protein is Small ribosomal subunit protein uS14.